We begin with the raw amino-acid sequence, 1461 residues long: Regulation of nuclear pre-mRNA domain-containing protein 2 (1461 aa).

N-acetylalanine is present on Ala-2. Ser-16 carries the post-translational modification Phosphoserine. In terms of domain architecture, CID spans 19-149 (SAGALESSLD…ALREALSTTF (131 aa)). Disordered regions lie at residues 311–438 (STLP…TSLS) and 469–504 (NTGVSPASRPSPGTPTSPSNLTSGLKTPAPATTTSH). Residues 352-368 (ESEKSATPEPVTDNRDV) show a composition bias toward basic and acidic residues. A Phosphoserine modification is found at Ser-356. Thr-358 is modified (phosphothreonine). The span at 369-378 (EDMELSDVED) shows a compositional bias: acidic residues. Phosphoserine is present on Ser-374. The segment covering 379-394 (DGSKIIVEDRKEKPAE) has biased composition (basic and acidic residues). The segment covering 397-416 (AVSTSVPTKPTENISKASSC) has biased composition (polar residues). 2 stretches are compositionally biased toward low complexity: residues 417–426 (TPVPVTMTAT) and 473–491 (SPASRPSPGTPTSPSNLTS). Phosphoserine occurs at positions 473, 476, and 479. A Phosphothreonine modification is found at Thr-482. Ser-485 carries the phosphoserine modification. Thr-517 carries the post-translational modification Phosphothreonine. The tract at residues 547–623 (TGNPVPASEA…SPGLPSTTFK (77 aa)) is disordered. Residues 553 to 566 (ASEAASQSTSASPA) are compositionally biased toward low complexity. Ser-564 is subject to Phosphoserine. Residues 567 to 583 (NTTVSTIKGRNLPSSAQ) are compositionally biased toward polar residues. Ser-593 is subject to Phosphoserine. Over residues 593–614 (SPNSSTSEVSSTSASKASIGQS) the composition is skewed to low complexity. Thr-598 carries the post-translational modification Phosphothreonine. Phosphoserine is present on residues Ser-614, Ser-663, Ser-665, and Ser-716. Disordered stretches follow at residues 696-849 (GSSA…MMNL), 900-997 (SENC…EKVL), 1016-1102 (ASRK…SGEP), 1132-1312 (STSG…APPL), and 1340-1461 (FGVL…PPRY). A Phosphothreonine modification is found at Thr-723. A Phosphoserine modification is found at Ser-730. Thr-732 carries the post-translational modification Phosphothreonine. Polar residues predominate over residues 742 to 752 (PTSSSVDTMSL). Residues Ser-758 and Ser-762 each carry the phosphoserine modification. Positions 758–768 (SPGSSTPSSTR) are enriched in low complexity. A Phosphothreonine modification is found at Thr-763. Phosphoserine is present on residues Ser-769, Ser-817, Ser-826, Ser-900, Ser-909, Ser-928, Ser-965, and Ser-976. Over residues 927 to 954 (RSPSPSKNDSFFTPDSNHNSLSQSTTGH) the composition is skewed to polar residues. The segment covering 1031-1055 (SKGTPSDGVSLSNLTQPSLTATDQQ) has biased composition (polar residues). A phosphoserine mark is found at Ser-1068 and Ser-1099. Positions 1141-1150 (GPSSASELAS) are enriched in low complexity. Gly residues predominate over residues 1151 to 1160 (LGGGGSGGLT). Over residues 1174 to 1189 (FQESVGSFRSNSFNST) the composition is skewed to polar residues. 2 stretches are compositionally biased toward pro residues: residues 1267–1277 (FPTPPPPPPPG) and 1290–1299 (STPPPPPPPV). An Asymmetric dimethylarginine modification is found at Arg-1366. The segment covering 1382–1391 (PHGGGGGGGS) has biased composition (gly residues). Positions 1417–1434 (PRPDFRPREPFLSRDPFH) are enriched in basic and acidic residues. 2 positions are modified to asymmetric dimethylarginine: Arg-1424 and Arg-1430.

In terms of assembly, associates with the RNA polymerase II complex.

This chain is Regulation of nuclear pre-mRNA domain-containing protein 2 (RPRD2), found in Homo sapiens (Human).